Reading from the N-terminus, the 292-residue chain is Cbb3-type cytochrome c oxidase subunit CcoP (292 aa).

A run of 2 helical transmembrane segments spans residues 11–31 and 62–82; these read FGLI…SSLI and VGWI…FFFG. 2 consecutive Cytochrome c domains span residues 116–195 and 205–288; these read ELVD…MAEI and QLID…QSLK. Positions 129, 132, 133, 174, 219, 222, 223, and 264 each coordinate heme c.

This sequence belongs to the CcoP / FixP family. In terms of assembly, component of the cbb3-type cytochrome c oxidase at least composed of CcoN, CcoO, CcoQ and CcoP. Requires heme c as cofactor.

Its subcellular location is the cell inner membrane. It functions in the pathway energy metabolism; oxidative phosphorylation. In terms of biological role, C-type cytochrome. Part of the cbb3-type cytochrome c oxidase complex. CcoP subunit is required for transferring electrons from donor cytochrome c via its heme groups to CcoO subunit. From there, electrons are shuttled to the catalytic binuclear center of CcoN subunit where oxygen reduction takes place. The complex also functions as a proton pump. This is Cbb3-type cytochrome c oxidase subunit CcoP from Helicobacter pylori (strain 52).